Here is a 275-residue protein sequence, read N- to C-terminus: Adenylate kinase 2 (275 aa).

Residue glycine 2 is the site of N-myristoyl glycine attachment. The tract at residues 21–30 is required for cell membrane translocation but dispensable for cell membrane localization; the sequence is KKKEKKKKKK. 39–44 contacts ATP; sequence GSGKDT. Residues 59 to 97 are NMP; that stretch reads CISKLLKEYKEEYNKENVLNEEENYFDEIEKCMIDGSLV. Residues 95–97, 126–129, and glutamine 133 contribute to the AMP site; these read SLV and GFPR. ATP is bound at residue arginine 164. Positions 165-214 are LID; that stretch reads IIDPITNISYNENIIQIIKKKREGQELSDKEQKQLIIDNHLYNNLSNDIL. Positions 220 and 231 each coordinate AMP.

Belongs to the adenylate kinase family. In terms of assembly, monomer. Oligomer. Heterodimer composed of NMT and AK2; AK2 myristoylation stabilizes the complex. Post-translationally, myristoylation is required for cell membrane localization. May be palmitoylated at Cys-4 which stabilizes cell membrane localization of the myristoylated protein.

It is found in the parasitophorous vacuole membrane. The catalysed reaction is AMP + ATP = 2 ADP. Functionally, catalyzes the reversible transfer of the terminal phosphate group between ATP and AMP. Has very low activity with CTP, GTP, ITP and UTP and no activity with GMP, UMP or IMP in vitro. The chain is Adenylate kinase 2 from Plasmodium falciparum (isolate 3D7).